A 124-amino-acid polypeptide reads, in one-letter code: UPF0102 protein HEAR0176 (124 aa).

Belongs to the UPF0102 family.

This is UPF0102 protein HEAR0176 from Herminiimonas arsenicoxydans.